Reading from the N-terminus, the 156-residue chain is Small ribosomal subunit protein uS7 (156 aa).

The protein belongs to the universal ribosomal protein uS7 family. Part of the 30S ribosomal subunit. Contacts proteins S9 and S11.

Functionally, one of the primary rRNA binding proteins, it binds directly to 16S rRNA where it nucleates assembly of the head domain of the 30S subunit. Is located at the subunit interface close to the decoding center, probably blocks exit of the E-site tRNA. The protein is Small ribosomal subunit protein uS7 of Leuconostoc mesenteroides subsp. mesenteroides (strain ATCC 8293 / DSM 20343 / BCRC 11652 / CCM 1803 / JCM 6124 / NCDO 523 / NBRC 100496 / NCIMB 8023 / NCTC 12954 / NRRL B-1118 / 37Y).